The sequence spans 234 residues: Leucyl/phenylalanyl-tRNA--protein transferase (234 aa).

The protein belongs to the L/F-transferase family.

It localises to the cytoplasm. The catalysed reaction is N-terminal L-lysyl-[protein] + L-leucyl-tRNA(Leu) = N-terminal L-leucyl-L-lysyl-[protein] + tRNA(Leu) + H(+). It carries out the reaction N-terminal L-arginyl-[protein] + L-leucyl-tRNA(Leu) = N-terminal L-leucyl-L-arginyl-[protein] + tRNA(Leu) + H(+). The enzyme catalyses L-phenylalanyl-tRNA(Phe) + an N-terminal L-alpha-aminoacyl-[protein] = an N-terminal L-phenylalanyl-L-alpha-aminoacyl-[protein] + tRNA(Phe). In terms of biological role, functions in the N-end rule pathway of protein degradation where it conjugates Leu, Phe and, less efficiently, Met from aminoacyl-tRNAs to the N-termini of proteins containing an N-terminal arginine or lysine. The protein is Leucyl/phenylalanyl-tRNA--protein transferase of Escherichia fergusonii (strain ATCC 35469 / DSM 13698 / CCUG 18766 / IAM 14443 / JCM 21226 / LMG 7866 / NBRC 102419 / NCTC 12128 / CDC 0568-73).